We begin with the raw amino-acid sequence, 443 residues long: Glutamyl-tRNA reductase (443 aa).

Residues 49-52, Ser-109, 114-116, and Gln-120 contribute to the substrate site; these read TCNR and ETQ. Catalysis depends on Cys-50, which acts as the Nucleophile. 189 to 194 is a binding site for NADP(+); the sequence is GAGDMS.

The protein belongs to the glutamyl-tRNA reductase family. As to quaternary structure, homodimer.

The catalysed reaction is (S)-4-amino-5-oxopentanoate + tRNA(Glu) + NADP(+) = L-glutamyl-tRNA(Glu) + NADPH + H(+). It functions in the pathway porphyrin-containing compound metabolism; protoporphyrin-IX biosynthesis; 5-aminolevulinate from L-glutamyl-tRNA(Glu): step 1/2. Its function is as follows. Catalyzes the NADPH-dependent reduction of glutamyl-tRNA(Glu) to glutamate 1-semialdehyde (GSA). The protein is Glutamyl-tRNA reductase of Staphylococcus saprophyticus subsp. saprophyticus (strain ATCC 15305 / DSM 20229 / NCIMB 8711 / NCTC 7292 / S-41).